A 340-amino-acid polypeptide reads, in one-letter code: uncharacterized protein (340 aa).

This is an uncharacterized protein from Archaeoglobus fulgidus (strain ATCC 49558 / DSM 4304 / JCM 9628 / NBRC 100126 / VC-16).